Consider the following 160-residue polypeptide: MNKEKELRAASPSLRHVQDLSSRVWILQNNILTAVPRKEQTVPVTITLLPCQYLDTLETNRGDPTYMGVQRPMSCLFCTKDGEQPVLQLGEGNIMEMYNKKEPVKASLFYHKKSGTTSTFESAAFPGWFIAVCSKGSCPLILTQELGEIFITDFEMIVVH.

A propeptide spanning residues 1–7 (MNKEKEL) is cleaved from the precursor. Position 98 is a 3'-nitrotyrosine (tyrosine 98).

The protein belongs to the IL-1 family. Interacts with TMED10; the interaction mediates the translocation from the cytoplasm into the ERGIC (endoplasmic reticulum-Golgi intermediate compartment) and thereby secretion. Post-translationally, N-terminal truncation leads to a dramatic enhancement of its activity (&gt;1000-fold). In terms of tissue distribution, highly expressed in embryonic tissue and in tissues containing epithelial cells. Elevated expression levels are detected in chronic kidney disease; expressed inepithelia from the distal convoluted tubules (DCTs) to the cortical collecting ducts (CCDs) in single nephrons (at protein level).

It localises to the cytoplasm. The protein resides in the secreted. Cytokine that binds to and signals through the IL1RL2/IL-36R receptor which in turn activates NF-kappa-B and MAPK signaling pathways in target cells linked to a pro-inflammatory response. Part of the IL-36 signaling system that is thought to be present in epithelial barriers and to take part in local inflammatory response; similar to the IL-1 system with which it shares the coreceptor IL1RAP. Seems to be involved in skin inflammatory response by acting on keratinocytes, dendritic cells and indirectly on T-cells to drive tissue infiltration, cell maturation and cell proliferation. Induces the production of pro-inflammatory cytokines, including IL-12, Il-1 beta, IL-6, TNF-alpha and IL-23 in bone marrow-derived dendritic cells (BMDCs). Involved in dendritic cell maturation by stimulating the surface expression of CD80, CD86 and MHC class II. Induces the production of IFN-gamma, IL-4 and IL-17 by cultured CD4(+) T-cells and splenocytes. May play a role in pro-inflammatory effects in the lung: induces the expression of CXCL1 and CXCL2 in the lung, and the expression of TNF-alpha, IL-36c, IL-1A, IL-1B, CXCL1 and CXCL2 in isolated splenic CD11c(+) alveolar macrophages. May be involved in T-cell maturation by stimulating the surface expression of CD40 and modestly CD80 and CD86 in splenic CD11c(+) cells. May be involved in CD4(+) T-cell proliferation. Induces NF-kappa B activation in macrophages. This Mus musculus (Mouse) protein is Interleukin-36 alpha.